A 354-amino-acid chain; its full sequence is Guanine nucleotide-binding protein G(t) subunit alpha-2 (354 aa).

Positions 1 to 28 (MGSGISAEDKELARRSKELEKKLQEDAD) are disordered. Gly-2 carries N-myristoyl glycine lipidation. Positions 7-28 (AEDKELARRSKELEKKLQEDAD) are enriched in basic and acidic residues. Positions 32–354 (KTVKLLLLGA…KENLKDCGLF (323 aa)) constitute a G-alpha domain. The interval 35–48 (KLLLLGAGESGKST) is G1 motif. Residues 40-47 (GAGESGKS), 175-181 (LRSRVKT), 200-204 (DVGGQ), 269-272 (NKKD), and Ala-326 each bind GTP. Positions 47 and 181 each coordinate Mg(2+). The interval 173 to 181 (DVLRSRVKT) is G2 motif. Residues 196 to 205 (FRMFDVGGQR) are G3 motif. Residues 265–272 (VLFLNKKD) form a G4 motif region. The segment at 324 to 329 (TCATDT) is G5 motif.

This sequence belongs to the G-alpha family. G(i/o/t/z) subfamily. In terms of assembly, g proteins are composed of 3 units; alpha, beta and gamma. The alpha chain contains the guanine nucleotide binding site. As to expression, in the retina, expressed in the rod photoreceptors.

It is found in the cell projection. The protein localises to the cilium. Its subcellular location is the photoreceptor outer segment. It localises to the photoreceptor inner segment. Functionally, guanine nucleotide-binding proteins (G proteins) are involved as modulators or transducers in various transmembrane signaling systems. Transducin is an amplifier and one of the transducers of a visual impulse that performs the coupling between rhodopsin and cGMP-phosphodiesterase. This chain is Guanine nucleotide-binding protein G(t) subunit alpha-2 (Gnat2), found in Mus musculus (Mouse).